The sequence spans 249 residues: 5'-nucleotidase SurE (249 aa).

Residues D8, D9, S39, and N91 each coordinate a divalent metal cation.

The protein belongs to the SurE nucleotidase family. The cofactor is a divalent metal cation.

The protein resides in the cytoplasm. The enzyme catalyses a ribonucleoside 5'-phosphate + H2O = a ribonucleoside + phosphate. Its function is as follows. Nucleotidase that shows phosphatase activity on nucleoside 5'-monophosphates. This Azotobacter vinelandii (strain DJ / ATCC BAA-1303) protein is 5'-nucleotidase SurE.